Reading from the N-terminus, the 3072-residue chain is E1A-binding protein p400 (3072 aa).

The span at 1–22 (MHHGSGPQNVQHQLQRSRSFTG) shows a compositional bias: polar residues. Disordered regions lie at residues 1–55 (MHHG…SPGY), 125–149 (PMSQ…LQNV), and 222–250 (LSQP…TGLQ). Over residues 31-40 (PNLPPSPAAP) the composition is skewed to pro residues. Low complexity-rich tracts occupy residues 41-53 (FAPS…PQSP) and 125-136 (PMSQQVQTQSPT). Residues Ser52 and Ser134 each carry the phosphoserine modification. A phosphoserine mark is found at Ser315 and Ser321. Disordered regions lie at residues 485-519 (SLTG…KRPR), 544-601 (MPTV…ASVP), and 635-769 (APIP…SQDK). Low complexity predominate over residues 556–569 (QATQLTGQKQSQQQ). Residues 570-583 (YDPSTGPPVQNAAS) show a composition bias toward polar residues. A compositionally biased stretch (pro residues) spans 586-599 (TPPPQLPARLPPAS). Composition is skewed to low complexity over residues 646–657 (PAPSSQPAQPAL), 668–682 (QTSQ…VAST), and 695–710 (SLPT…PVSG). Composition is skewed to polar residues over residues 724–741 (NRPS…TSRS) and 754–765 (SPAQNAASSQDG). Phosphoserine occurs at positions 735, 741, and 754. The 73-residue stretch at 798–870 (LPKLQEAPRP…EQSRLRRIAA (73 aa)) folds into the HSA domain. The span at 914–928 (ESRLKGFDTSPEHSL) shows a compositional bias: basic and acidic residues. Disordered regions lie at residues 914–952 (ESRL…EDEE) and 997–1024 (FQWP…DRES). Phosphothreonine is present on Thr922. Residues Ser923, Ser927, and Ser940 each carry the phosphoserine modification. Thr944 is modified (phosphothreonine). The tract at residues 950–1364 (DEEETIEEEE…SVLSVLTRLQ (415 aa)) is interactions with RUVBL1 and RUVBL2. Ser1009 and Ser1010 each carry phosphoserine. Positions 1102–1267 (AKLYRKNLNG…WTMVHFLIPG (166 aa)) constitute a Helicase ATP-binding domain. An ATP-binding site is contributed by 1115–1122 (DEAGLGKT). Positions 1218-1221 (DEMQ) match the DEAD box-like motif. N6-acetyllysine is present on Lys1471. Residues 1473-1503 (EGRTVAFPSTHPPRMANTNTSTATPQGQVRG) are disordered. Positions 1488 to 1499 (ANTNTSTATPQG) are enriched in polar residues. 2 positions are modified to phosphoserine: Ser1646 and Ser1650. The Helicase C-terminal domain maps to 1815-1972 (KLEALAILLQ…GNDYSMAFLT (158 aa)). Disordered regions lie at residues 2033-2062 (AQRS…DEEP) and 2203-2227 (KERK…GEAV). Positions 2043–2053 (GSSSVAVSSDS) are enriched in low complexity. Lys2265 and Lys2272 each carry N6-acetyllysine. The region spanning 2276 to 2345 (EPAQDSPDWL…QCRNRYENVI (70 aa)) is the Myb-like domain. The tract at residues 2440-2699 (KEKKALADQQ…QQQQQQQQQT (260 aa)) is interaction with ZNF42. Residues 2441–2534 (EKKALADQQK…PQSKGQPTMT (94 aa)) are disordered. 2 stretches are compositionally biased toward low complexity: residues 2446-2455 (ADQQKAQQPP) and 2463-2478 (QQQQ…QQQQ). Pro residues predominate over residues 2479–2493 (QPPPPPQQPPPPVPQ). The segment covering 2494 to 2526 (PQAASSQTPAGQPAVQPQPQPQVQTQPQPVQPQ) has biased composition (low complexity). Ser2614 carries the post-translational modification Phosphoserine. 2 disordered regions span residues 2734–2790 (QKMQ…TGTT) and 3028–3072 (ASLQ…PPCQ). The span at 2739–2754 (PPQPPPPQAQPGPPQQ) shows a compositional bias: pro residues. The segment covering 2755–2775 (PAQVQVQTPQPPQQQQSPQLT) has biased composition (low complexity). Positions 3042-3053 (PASSDSPSQQPK) are enriched in polar residues.

It belongs to the SNF2/RAD54 helicase family. SWR1 subfamily. Component of the NuA4 histone acetyltransferase complex which contains the catalytic subunit KAT5/TIP60 and the subunits EP400, TRRAP/PAF400, BRD8/SMAP, EPC1, DMAP1/DNMAP1, RUVBL1/TIP49, RUVBL2, ING3, actin, ACTL6A/BAF53A, MORF4L1/MRG15, MORF4L2/MRGX, MRGBP, YEATS4/GAS41, VPS72/YL1 and MEAF6. May also participate in the formation of NuA4 related complexes which lack the KAT5/TIP60 catalytic subunit, but which include the SWI/SNF related protein SRCAP. The NuA4 complex interacts with MYC. EP400 interacts with TRRAP, RUVBL1 and RUVBL2. Component of a SWR1-like complex. Interacts with ZNF42. Interacts with PHF5A. As to expression, expressed in brain, thymus, lung, liver, spleen, kidney, colon and bone marrow.

The protein resides in the nucleus. Its function is as follows. Component of the NuA4 histone acetyltransferase complex which is involved in transcriptional activation of select genes principally by acetylation of nucleosomal histones H4 and H2A. This modification may both alter nucleosome - DNA interactions and promote interaction of the modified histones with other proteins which positively regulate transcription. May be required for transcriptional activation of E2F1 and MYC target genes during cellular proliferation. The NuA4 complex ATPase and helicase activities seem to be, at least in part, contributed by the association of RUVBL1 and RUVBL2 with EP400. Component of a SWR1-like complex that specifically mediates the removal of histone H2A.Z/H2AZ1 from the nucleosome. Regulates transcriptional activity of ZNF42. The polypeptide is E1A-binding protein p400 (Ep400) (Mus musculus (Mouse)).